A 338-amino-acid polypeptide reads, in one-letter code: Trans-enoyl reductase fsr4 (338 aa).

65–68 contributes to the NADP(+) binding site; sequence KDWK. 147–153 contacts substrate; sequence AAFTAAC. NADP(+) is bound by residues 182–185, 205–208, Y227, and 277–278; these read SSAV, AGRA, and II.

The protein belongs to the zinc-containing alcohol dehydrogenase family.

Trans-enoyl reductase; part of the gene cluster that mediates the biosynthesis of fusarubins, highly pigmented naphthoquinones responsible for the coloration of the fruiting bodies. The non-reducing polyketide synthase FSR1 is responsible for the condensation of seven acetyl-CoA units to yield a haptaketide. After rings A and B are formed by aldol-type cyclization, the PKS-derived product is released as 6-O-demethylfusarubinaldehyde. Then, two hydroxyl groups at C-5 and C-10 are incorporated by FSR3, and simultaneously hydroxyl groups at C-6 and C-8 are methylated by FSR2. The aldehyde is, on the one hand, reduced by FSR3 to 8-O-methylfusarubin alcohol, which equilibrates mainly with 8-O-methylfusarubin and only small amounts of 8-O-methylnectriafurone. On the other hand, the aldehyde can be oxidized to form 8-O-methylfusarubinic acid, a reaction driven by FSR3 equilibrating with 8-O-methylfusarubinlactone, finally resulting in 8-O-methylanhydrofusarubinlactol after a further reduction step and loss of water. 8-O-Methylfusarubinic acid can also undergo decarboxylation, resulting in 8-O-methyl-13-hydroxynorjavanicin after another hydroxylation step at C-13. Both steps are most likely also accomplished by FSR3. No enzymatic function has been determined so far for either FSR4 and FSR5. Their deletion does not alter the product spectrum, but the possibility that they catalyze specific enzymatic steps during perithecium development cannot be ruled out. FSR4 might possess a regulatory function in the biosynthesis of fusarubins. This is Trans-enoyl reductase fsr4 from Gibberella fujikuroi (strain CBS 195.34 / IMI 58289 / NRRL A-6831) (Bakanae and foot rot disease fungus).